Here is a 333-residue protein sequence, read N- to C-terminus: uncharacterized protein (333 aa).

The signal sequence occupies residues Met1 to Ala23. The chain crosses the membrane as a helical span at residues Ser232 to Trp252.

It is found in the membrane. This is an uncharacterized protein from Pyrococcus abyssi (strain GE5 / Orsay).